We begin with the raw amino-acid sequence, 204 residues long: Peptide deformylase (204 aa).

Fe cation-binding residues include cysteine 131 and histidine 174. Residue glutamate 175 is part of the active site. Histidine 178 contributes to the Fe cation binding site.

The protein belongs to the polypeptide deformylase family. The cofactor is Fe(2+).

It catalyses the reaction N-terminal N-formyl-L-methionyl-[peptide] + H2O = N-terminal L-methionyl-[peptide] + formate. Functionally, removes the formyl group from the N-terminal Met of newly synthesized proteins. Requires at least a dipeptide for an efficient rate of reaction. N-terminal L-methionine is a prerequisite for activity but the enzyme has broad specificity at other positions. The sequence is that of Peptide deformylase from Streptococcus equi subsp. zooepidemicus (strain H70).